The chain runs to 432 residues: Histidinol dehydrogenase (432 aa).

Residues Tyr-133, Gln-194, and Asn-217 each coordinate NAD(+). Positions 240, 262, and 265 each coordinate substrate. Positions 262 and 265 each coordinate Zn(2+). Active-site proton acceptor residues include Glu-330 and His-331. 4 residues coordinate substrate: His-331, Asp-364, Glu-418, and His-423. Asp-364 serves as a coordination point for Zn(2+). Residue His-423 participates in Zn(2+) binding.

The protein belongs to the histidinol dehydrogenase family. Zn(2+) is required as a cofactor.

The catalysed reaction is L-histidinol + 2 NAD(+) + H2O = L-histidine + 2 NADH + 3 H(+). The protein operates within amino-acid biosynthesis; L-histidine biosynthesis; L-histidine from 5-phospho-alpha-D-ribose 1-diphosphate: step 9/9. Catalyzes the sequential NAD-dependent oxidations of L-histidinol to L-histidinaldehyde and then to L-histidine. This chain is Histidinol dehydrogenase, found in Nitrosomonas europaea (strain ATCC 19718 / CIP 103999 / KCTC 2705 / NBRC 14298).